Consider the following 263-residue polypeptide: Zinc import ATP-binding protein ZnuC (263 aa).

The region spanning 11-226 (VELKNINVVF…PTFIHFFGDQ (216 aa)) is the ABC transporter domain. 43 to 50 (GPNGGGKS) is an ATP binding site.

Belongs to the ABC transporter superfamily. Zinc importer (TC 3.A.1.15.5) family. As to quaternary structure, the complex is composed of two ATP-binding proteins (ZnuC), two transmembrane proteins (ZnuB) and a solute-binding protein (ZnuA).

It localises to the cell inner membrane. The catalysed reaction is Zn(2+)(out) + ATP(in) + H2O(in) = Zn(2+)(in) + ADP(in) + phosphate(in) + H(+)(in). Part of the ABC transporter complex ZnuABC involved in zinc import. Responsible for energy coupling to the transport system. This Pasteurella multocida (strain Pm70) protein is Zinc import ATP-binding protein ZnuC.